A 105-amino-acid chain; its full sequence is Intracellular chorismate mutase (105 aa).

Residues 23-105 (SQPVPEIDTL…LRLGRGRLGH (83 aa)) form the Chorismate mutase domain. Chorismate contacts are provided by Arg-61, Val-70, and Glu-74.

As to quaternary structure, homodimer. Interacts with AroG.

It localises to the cytoplasm. The enzyme catalyses chorismate = prephenate. Its pathway is metabolic intermediate biosynthesis; prephenate biosynthesis; prephenate from chorismate: step 1/1. With respect to regulation, the formation of the complex with AroG activates the chorismate mutase activity. Its function is as follows. Catalyzes the Claisen rearrangement of chorismate to prephenate. Probably involved in the aromatic amino acid biosynthesis. This is Intracellular chorismate mutase from Mycobacterium bovis (strain ATCC BAA-935 / AF2122/97).